We begin with the raw amino-acid sequence, 353 residues long: Photosystem II D2 protein (353 aa).

Thr2 is subject to N-acetylthreonine. Position 2 is a phosphothreonine (Thr2). A helical membrane pass occupies residues 41–61 (CAYFALGGWFTGTTFVTSWYT). Chlorophyll a is bound at residue His118. A helical membrane pass occupies residues 125–141 (GFMLRQFELARSVQLRP). Positions 130 and 143 each coordinate pheophytin a. Residues 153-166 (VFVSVFLIYPLGQS) traverse the membrane as a helical segment. His198 serves as a coordination point for chlorophyll a. The chain crosses the membrane as a helical span at residues 208–228 (AALLCAIHGATVENTLFEDGD). A plastoquinone is bound by residues His215 and Phe262. His215 is a binding site for Fe cation. His269 serves as a coordination point for Fe cation. A helical membrane pass occupies residues 279–295 (GLWMSALGVVGLALNLR).

It belongs to the reaction center PufL/M/PsbA/D family. In terms of assembly, PSII is composed of 1 copy each of membrane proteins PsbA, PsbB, PsbC, PsbD, PsbE, PsbF, PsbH, PsbI, PsbJ, PsbK, PsbL, PsbM, PsbT, PsbX, PsbY, PsbZ, Psb30/Ycf12, at least 3 peripheral proteins of the oxygen-evolving complex and a large number of cofactors. It forms dimeric complexes. The cofactor is The D1/D2 heterodimer binds P680, chlorophylls that are the primary electron donor of PSII, and subsequent electron acceptors. It shares a non-heme iron and each subunit binds pheophytin, quinone, additional chlorophylls, carotenoids and lipids. There is also a Cl(-1) ion associated with D1 and D2, which is required for oxygen evolution. The PSII complex binds additional chlorophylls, carotenoids and specific lipids..

The protein resides in the plastid. Its subcellular location is the chloroplast thylakoid membrane. The enzyme catalyses 2 a plastoquinone + 4 hnu + 2 H2O = 2 a plastoquinol + O2. Photosystem II (PSII) is a light-driven water:plastoquinone oxidoreductase that uses light energy to abstract electrons from H(2)O, generating O(2) and a proton gradient subsequently used for ATP formation. It consists of a core antenna complex that captures photons, and an electron transfer chain that converts photonic excitation into a charge separation. The D1/D2 (PsbA/PsbD) reaction center heterodimer binds P680, the primary electron donor of PSII as well as several subsequent electron acceptors. D2 is needed for assembly of a stable PSII complex. The chain is Photosystem II D2 protein from Aethionema grandiflorum (Persian stone-cress).